The following is a 757-amino-acid chain: Xaa-Pro dipeptidyl-peptidase (757 aa).

Catalysis depends on charge relay system residues serine 348, aspartate 468, and histidine 498.

This sequence belongs to the peptidase S15 family. Homodimer.

The protein localises to the cytoplasm. The enzyme catalyses Hydrolyzes Xaa-Pro-|- bonds to release unblocked, N-terminal dipeptides from substrates including Ala-Pro-|-p-nitroanilide and (sequentially) Tyr-Pro-|-Phe-Pro-|-Gly-Pro-|-Ile.. Functionally, removes N-terminal dipeptides sequentially from polypeptides having unsubstituted N-termini provided that the penultimate residue is proline. This Streptococcus pneumoniae (strain P1031) protein is Xaa-Pro dipeptidyl-peptidase.